A 175-amino-acid chain; its full sequence is Large ribosomal subunit protein uL6 (175 aa).

This sequence belongs to the universal ribosomal protein uL6 family. As to quaternary structure, part of the 50S ribosomal subunit.

In terms of biological role, this protein binds to the 23S rRNA, and is important in its secondary structure. It is located near the subunit interface in the base of the L7/L12 stalk, and near the tRNA binding site of the peptidyltransferase center. The sequence is that of Large ribosomal subunit protein uL6 from Xylella fastidiosa (strain 9a5c).